The following is a 220-amino-acid chain: Large ribosomal subunit protein uL4 (220 aa).

The tract at residues 45–102 is disordered; the sequence is AARQGTHKTKTRGEVRGGGRKPFRQKGTGRARQGSIRAPHYTGGGTVHGPVPRDYSQR. Residues 62–73 show a composition bias toward basic residues; that stretch reads GGRKPFRQKGTG.

It belongs to the universal ribosomal protein uL4 family. In terms of assembly, part of the 50S ribosomal subunit.

One of the primary rRNA binding proteins, this protein initially binds near the 5'-end of the 23S rRNA. It is important during the early stages of 50S assembly. It makes multiple contacts with different domains of the 23S rRNA in the assembled 50S subunit and ribosome. Functionally, forms part of the polypeptide exit tunnel. The protein is Large ribosomal subunit protein uL4 of Corynebacterium aurimucosum (strain ATCC 700975 / DSM 44827 / CIP 107346 / CN-1) (Corynebacterium nigricans).